We begin with the raw amino-acid sequence, 370 residues long: MEKELDLSQYSVRTDLAVEAKDIALENQPKPNNQSEIKGVIVKEKEEQGVKISMVEITEEGAEAIGKKKGRYVTLESVGIREQDTEKQEAMEEVFAKELNFFIKSLNIPDDASCLVVGLGNLSVTPDALGPKAVDNLLITRHLFELQPESVQDGFRPVSAIVPGVMGMTGIETSDIIFGVVKKVNPDFIIAIDALAARSIERVNATIQISDSGIHPGSGVGNKRKEISYETLGIPVIAIGIPTVVDAVSITSDTIDFILKHFGREMKEQGKPSKSLLPSGMTFGEKKKLTEDDLPNEEQRQTYLGMIGTLPDEEKRRLIHEVLAPLGHNLMVTPKEVDMFIEDMANVVAGGLNAALHHEVDQENFGAYTH.

Residues 1 to 15 (MEKELDLSQYSVRTD) constitute a propeptide that is removed on maturation.

Belongs to the peptidase A25 family. Homotetramer. Post-translationally, autoproteolytically processed. The inactive tetrameric zymogen termed p46 autoprocesses to a smaller form termed p41, which is active only during spore germination.

It carries out the reaction Endopeptidase action with P4 Glu or Asp, P1 preferably Glu &gt; Asp, P1' hydrophobic and P2' Ala.. Functionally, initiates the rapid degradation of small, acid-soluble proteins during spore germination. The protein is Germination protease (gpr) of Priestia megaterium (strain ATCC 12872 / QMB1551) (Bacillus megaterium).